Reading from the N-terminus, the 554-residue chain is CTP synthase (554 aa).

Residues 1 to 265 (MTPLIFVTGG…DEIVVNQLKL (265 aa)) form an amidoligase domain region. Ser-13 provides a ligand contact to CTP. Ser-13 contacts UTP. 14–19 (SLGKGI) serves as a coordination point for ATP. 2 residues coordinate Mg(2+): Asp-71 and Glu-139. CTP contacts are provided by residues 146-148 (DIE), 186-191 (KTKPTQ), and Lys-222. Residues 186 to 191 (KTKPTQ) and Lys-222 contribute to the UTP site. Residues 292–545 (TIAVVGKYVD…IRAARERKAG (254 aa)) enclose the Glutamine amidotransferase type-1 domain. Position 353 (Gly-353) interacts with L-glutamine. Cys-380 (nucleophile; for glutamine hydrolysis) is an active-site residue. L-glutamine-binding positions include 381–384 (YGMQ), Glu-404, and Arg-471. Active-site residues include His-518 and Glu-520.

This sequence belongs to the CTP synthase family. As to quaternary structure, homotetramer.

It carries out the reaction UTP + L-glutamine + ATP + H2O = CTP + L-glutamate + ADP + phosphate + 2 H(+). It catalyses the reaction L-glutamine + H2O = L-glutamate + NH4(+). The catalysed reaction is UTP + NH4(+) + ATP = CTP + ADP + phosphate + 2 H(+). It functions in the pathway pyrimidine metabolism; CTP biosynthesis via de novo pathway; CTP from UDP: step 2/2. Its activity is regulated as follows. Allosterically activated by GTP, when glutamine is the substrate; GTP has no effect on the reaction when ammonia is the substrate. The allosteric effector GTP functions by stabilizing the protein conformation that binds the tetrahedral intermediate(s) formed during glutamine hydrolysis. Inhibited by the product CTP, via allosteric rather than competitive inhibition. Its function is as follows. Catalyzes the ATP-dependent amination of UTP to CTP with either L-glutamine or ammonia as the source of nitrogen. Regulates intracellular CTP levels through interactions with the four ribonucleotide triphosphates. This is CTP synthase from Stenotrophomonas maltophilia (strain K279a).